Consider the following 157-residue polypeptide: MKKKANRLDAIKMIISSKEVGSQEELLQELGQEGFELTQATLSRDLKQLKVAKAASMNGKYVYVLPNDIMYKRVGDQSASEMLMNNGFISLQFSGNIAVIKTRPGYASSMAYDIDNRESDTILGTIAGDDTIMLVLREGATPTAVRHFLSLIIPNIN.

It belongs to the ArgR family.

The protein localises to the cytoplasm. It functions in the pathway amino-acid biosynthesis; L-arginine biosynthesis [regulation]. In terms of biological role, regulates arginine biosynthesis genes. The polypeptide is Arginine repressor (Bacteroides fragilis (strain YCH46)).